The following is a 72-amino-acid chain: Translation initiation factor IF-1 (72 aa).

Residues 1 to 72 (MAKDDVIEIE…TKGRITYRFK (72 aa)) enclose the S1-like domain.

This sequence belongs to the IF-1 family. As to quaternary structure, component of the 30S ribosomal translation pre-initiation complex which assembles on the 30S ribosome in the order IF-2 and IF-3, IF-1 and N-formylmethionyl-tRNA(fMet); mRNA recruitment can occur at any time during PIC assembly.

It localises to the cytoplasm. One of the essential components for the initiation of protein synthesis. Stabilizes the binding of IF-2 and IF-3 on the 30S subunit to which N-formylmethionyl-tRNA(fMet) subsequently binds. Helps modulate mRNA selection, yielding the 30S pre-initiation complex (PIC). Upon addition of the 50S ribosomal subunit IF-1, IF-2 and IF-3 are released leaving the mature 70S translation initiation complex. This is Translation initiation factor IF-1 from Latilactobacillus sakei subsp. sakei (strain 23K) (Lactobacillus sakei subsp. sakei).